A 73-amino-acid polypeptide reads, in one-letter code: Translation initiation factor IF-1 (73 aa).

Residues 1-73 form the S1-like domain; the sequence is MAKKDGVIEI…TRGRIVYRYK (73 aa).

This sequence belongs to the IF-1 family. In terms of assembly, component of the 30S ribosomal translation pre-initiation complex which assembles on the 30S ribosome in the order IF-2 and IF-3, IF-1 and N-formylmethionyl-tRNA(fMet); mRNA recruitment can occur at any time during PIC assembly.

The protein localises to the cytoplasm. Functionally, one of the essential components for the initiation of protein synthesis. Stabilizes the binding of IF-2 and IF-3 on the 30S subunit to which N-formylmethionyl-tRNA(fMet) subsequently binds. Helps modulate mRNA selection, yielding the 30S pre-initiation complex (PIC). Upon addition of the 50S ribosomal subunit IF-1, IF-2 and IF-3 are released leaving the mature 70S translation initiation complex. This is Translation initiation factor IF-1 from Clavibacter michiganensis subsp. michiganensis (strain NCPPB 382).